The following is an 82-amino-acid chain: MKTLLLTLLVVTIVCLDLGYTLECHNQQSSQTPTTKTCSGETNCYKKWWSDHRGTIIERGCGCPKVKPGVNLNCCTTDRCNN.

The signal sequence occupies residues 1–21 (MKTLLLTLLVVTIVCLDLGYT). 4 disulfides stabilise this stretch: C24-C44, C38-C61, C63-C74, and C75-C80.

This sequence belongs to the three-finger toxin family. Short-chain subfamily. Type I alpha-neurotoxin sub-subfamily. In terms of tissue distribution, expressed by the venom gland.

The protein resides in the secreted. In terms of biological role, binds to muscle nicotinic acetylcholine receptor (nAChR) and inhibit acetylcholine from binding to the receptor, thereby impairing neuromuscular transmission. Produces peripheral paralysis by blocking neuromuscular transmission at the postsynaptic site. Has a lower toxicity than cobrotoxin. This chain is Cobrotoxin-b, found in Naja atra (Chinese cobra).